Here is a 57-residue protein sequence, read N- to C-terminus: Small ribosomal subunit protein bS21 (57 aa).

A disordered region spans residues 34 to 57 (RKEHYIKPSVQKKNRQKNMRSKKR). The segment covering 43–57 (VQKKNRQKNMRSKKR) has biased composition (basic residues).

The protein belongs to the bacterial ribosomal protein bS21 family.

This Aster yellows witches'-broom phytoplasma (strain AYWB) protein is Small ribosomal subunit protein bS21.